Here is a 135-residue protein sequence, read N- to C-terminus: MTYAIVETSGKQLWVEPGRFYDVDRLPGTEENSPLALSQVLLINHEGQVTLGHPYVPEAVVRARVLQHRRGNKIIVYKMRPKKGTRKKRGHRQPLTRVLIESIELNGTTLATAQSAPPSTSEATTDTTGIPAAEE.

A compositionally biased stretch (polar residues) spans 109–128; the sequence is TLATAQSAPPSTSEATTDTT. The tract at residues 109 to 135 is disordered; the sequence is TLATAQSAPPSTSEATTDTTGIPAAEE.

This sequence belongs to the bacterial ribosomal protein bL21 family. As to quaternary structure, part of the 50S ribosomal subunit. Contacts protein L20.

This protein binds to 23S rRNA in the presence of protein L20. This chain is Large ribosomal subunit protein bL21, found in Synechococcus sp. (strain JA-3-3Ab) (Cyanobacteria bacterium Yellowstone A-Prime).